The sequence spans 235 residues: Small ribosomal subunit protein eS4 (235 aa).

Positions 38–101 constitute an S4 RNA-binding domain; that stretch reads IPLLVLVRDF…EKSYRILFDE (64 aa).

The protein belongs to the eukaryotic ribosomal protein eS4 family.

This chain is Small ribosomal subunit protein eS4 (rps4e), found in Archaeoglobus fulgidus (strain ATCC 49558 / DSM 4304 / JCM 9628 / NBRC 100126 / VC-16).